A 233-amino-acid polypeptide reads, in one-letter code: MREHRPVIALDFPSFEAVKEFLALFPAEESLYLKVGMELYYAAGPEIVSYLKGLGHSVFLDLKLHDIPNTVKSAMKVLSQLGVDMTNVHAAGGVEMMKAAREGLGSQAKLIAVTQLTSTSEAQMQEFQNIQTSLQESVIHYAKKTAEAGLDGVVCSAQEVQVIKQATNPDFICLTPGIRPAGAAVGDQKRVMTPADAYQIGSDYIVVGRPITQAEDPVAAYHTIKDEWTQDWN.

Substrate-binding positions include aspartate 11, lysine 34, 61-70 (DLKLHDIPNT), threonine 117, arginine 179, glutamine 188, glycine 208, and arginine 209. Lysine 63 functions as the Proton donor in the catalytic mechanism.

It belongs to the OMP decarboxylase family. Type 1 subfamily. In terms of assembly, homodimer.

The enzyme catalyses orotidine 5'-phosphate + H(+) = UMP + CO2. The protein operates within pyrimidine metabolism; UMP biosynthesis via de novo pathway; UMP from orotate: step 2/2. Catalyzes the decarboxylation of orotidine 5'-monophosphate (OMP) to uridine 5'-monophosphate (UMP). The sequence is that of Orotidine 5'-phosphate decarboxylase from Streptococcus pneumoniae (strain JJA).